A 356-amino-acid chain; its full sequence is Nicotinate-nucleotide--dimethylbenzimidazole phosphoribosyltransferase (356 aa).

Glutamate 317 acts as the Proton acceptor in catalysis.

The protein belongs to the CobT family. Homodimer.

It catalyses the reaction 5,6-dimethylbenzimidazole + nicotinate beta-D-ribonucleotide = alpha-ribazole 5'-phosphate + nicotinate + H(+). Its pathway is nucleoside biosynthesis; alpha-ribazole biosynthesis; alpha-ribazole from 5,6-dimethylbenzimidazole: step 1/2. Its function is as follows. Catalyzes the synthesis of alpha-ribazole-5'-phosphate from nicotinate mononucleotide (NAMN) and 5,6-dimethylbenzimidazole (DMB). The polypeptide is Nicotinate-nucleotide--dimethylbenzimidazole phosphoribosyltransferase (Salmonella agona (strain SL483)).